The following is an 883-amino-acid chain: Phosphoenolpyruvate carboxylase (883 aa).

Catalysis depends on residues His138 and Lys546.

Belongs to the PEPCase type 1 family. Homotetramer. Requires Mg(2+) as cofactor.

It carries out the reaction oxaloacetate + phosphate = phosphoenolpyruvate + hydrogencarbonate. With respect to regulation, the enzyme has distinct binding sites for each of the allosteric effectors such as acetyl-CoA, fructose 1,6-bisphosphate, guanosine 3'-diphosphate 5'-diphosphate, long chain fatty acids, and L-aspartate. Forms oxaloacetate, a four-carbon dicarboxylic acid source for the tricarboxylic acid cycle. This chain is Phosphoenolpyruvate carboxylase, found in Escherichia coli O157:H7.